The sequence spans 342 residues: Central glycolytic genes regulator (342 aa).

The H-T-H motif DNA-binding region spans 37–56; it reads RRNLAVSLGLTERVLRSEVT.

Belongs to the SorC transcriptional regulatory family. In terms of assembly, homotetramer.

Functionally, in the absence of glucose, represses the transcription of the gapA operon, which encodes five key glycolytic enzymes. This is Central glycolytic genes regulator (cggR) from Priestia megaterium (strain DSM 319 / IMG 1521) (Bacillus megaterium).